Reading from the N-terminus, the 79-residue chain is Toxin ICK-20 (79 aa).

The N-terminal stretch at 1–20 (MMKYFLVLCLVVLGVAAVQA) is a signal peptide. Intrachain disulfides connect Cys-43–Cys-57, Cys-50–Cys-61, Cys-56–Cys-78, and Cys-68–Cys-74. Residue Asn-71 is glycosylated (N-linked (GlcNAc...) asparagine).

Belongs to the neurotoxin 13 (insecticidal toxin ABC) family. ICK-21 subfamily. In terms of tissue distribution, expressed by the venom gland.

The protein resides in the secreted. Ion channel inhibitor. The protein is Toxin ICK-20 of Trittame loki (Brush-footed trapdoor spider).